A 281-amino-acid chain; its full sequence is HTH-type transcriptional activator RhaR (281 aa).

The 99-residue stretch at 178–276 (DKLLAALAAS…GMSPGQWRQR (99 aa)) folds into the HTH araC/xylS-type domain. 2 DNA-binding regions (H-T-H motif) span residues 195 to 216 (ERFC…RQQT) and 243 to 266 (IGDI…SREI).

Binds DNA as a dimer.

It localises to the cytoplasm. In terms of biological role, activates expression of the rhaSR operon in response to L-rhamnose. This Klebsiella pneumoniae subsp. pneumoniae (strain ATCC 700721 / MGH 78578) protein is HTH-type transcriptional activator RhaR.